The primary structure comprises 397 residues: Elongation factor Tu (397 aa).

The tr-type G domain maps to 10–207 (KPHLNIGTIG…AVDAYIPEPE (198 aa)). The G1 stretch occupies residues 19 to 26 (GHVDHGKT). Position 19 to 26 (19 to 26 (GHVDHGKT)) interacts with GTP. A Mg(2+)-binding site is contributed by threonine 26. Residues 60–64 (GVTIN) form a G2 region. The tract at residues 81 to 84 (DCPG) is G3. GTP-binding positions include 81–85 (DCPGH) and 136–139 (NKVD). The segment at 136-139 (NKVD) is G4. Residues 174 to 176 (SAL) form a G5 region.

This sequence belongs to the TRAFAC class translation factor GTPase superfamily. Classic translation factor GTPase family. EF-Tu/EF-1A subfamily. Monomer.

It is found in the cytoplasm. It carries out the reaction GTP + H2O = GDP + phosphate + H(+). GTP hydrolase that promotes the GTP-dependent binding of aminoacyl-tRNA to the A-site of ribosomes during protein biosynthesis. This is Elongation factor Tu from Syntrophus aciditrophicus (strain SB).